The sequence spans 578 residues: Longifolene synthase (578 aa).

Residues aspartate 331, aspartate 335, and aspartate 475 each contribute to the Mg(2+) site. Residues 331 to 335 carry the DDXXD motif motif; it reads DDLYD.

This sequence belongs to the terpene synthase family. Tpsd subfamily. Mg(2+) serves as cofactor. It depends on Mn(2+) as a cofactor.

Its subcellular location is the cytoplasm. The enzyme catalyses (2E,6E)-farnesyl diphosphate = longifolene + diphosphate. It participates in sesquiterpene biosynthesis. Its pathway is terpene metabolism; oleoresin biosynthesis. Functionally, involved in defensive oleoresin formation in conifers in response to insect attack or other injury. Involved in sesquiterpene (C15) olefins biosynthesis. Produces mainly longifolene, but also multiple minor products including alpha-longipinene, alpha-longicyclene, E-beta-farnesene, longiborneol, cyclosativene, beta-longipinene, and 12 other sesquiterpenes when used with farnesyl diphosphate (FPP) as substrate. The sequence is that of Longifolene synthase (TPS-Lon) from Picea abies (Norway spruce).